The sequence spans 457 residues: Cysteine--tRNA ligase (457 aa).

C30 lines the Zn(2+) pocket. The short motif at 32-42 (PTVYAPAHIGN) is the 'HIGH' region element. 3 residues coordinate Zn(2+): C221, H246, and E250. The short motif at 278 to 282 (KMSKS) is the 'KMSKS' region element. Position 281 (K281) interacts with ATP.

Belongs to the class-I aminoacyl-tRNA synthetase family. As to quaternary structure, monomer. It depends on Zn(2+) as a cofactor.

Its subcellular location is the cytoplasm. The catalysed reaction is tRNA(Cys) + L-cysteine + ATP = L-cysteinyl-tRNA(Cys) + AMP + diphosphate. The protein is Cysteine--tRNA ligase of Opitutus terrae (strain DSM 11246 / JCM 15787 / PB90-1).